The following is a 110-amino-acid chain: Insulin-2 (110 aa).

The N-terminal stretch at 1-24 (MALWIRFLPLLALLILWEPRPAQA) is a signal peptide. Intrachain disulfides connect Cys31–Cys96, Cys43–Cys109, and Cys95–Cys100. Residues 57–87 (EVEDPQVAQLELGGGPGAGDLQTLALEVARQ) constitute a propeptide, c peptide.

The protein belongs to the insulin family. In terms of assembly, heterodimer of a B chain and an A chain linked by two disulfide bonds.

Its subcellular location is the secreted. In terms of biological role, insulin decreases blood glucose concentration. It increases cell permeability to monosaccharides, amino acids and fatty acids. It accelerates glycolysis, the pentose phosphate cycle, and glycogen synthesis in liver. This Rattus norvegicus (Rat) protein is Insulin-2 (Ins2).